The primary structure comprises 311 residues: MKKKSLLPLGLAIGLASLAASPLIQASTYTQTKYPIVLAHGMLGFDNILGVDYWFGIPSALRRDGAQVYVTEVSQLDTSEVRGEQLLQQVEEIVALSGQPKVNLIGHSHGGPTIRYVAAVRPDLMPSATSVGAPHKGSDTADFLRQIPPGSAGEAVLSGLVNSLGALISFLSSGSAGTQNSLGSLESLNSEGAARFNAKYPQGIPTSACGEGAYKVNGVSYYSWSGSSPLTNFLDPSDAFLGASSLTFKNGTANDGLVGTCSSHLGMVIRDNYRMNHLDEVNQVFGLTSLFETSPVSVYRQHANRLKNASL.

An N-terminal signal peptide occupies residues 1–26; it reads MKKKSLLPLGLAIGLASLAASPLIQA. The AB hydrolase-1 domain maps to 35–280; sequence PIVLAHGMLG…DNYRMNHLDE (246 aa). Met-42 lines the substrate pocket. Ser-108 serves as the catalytic Nucleophile. His-109 provides a ligand contact to substrate. A disulfide bridge links Cys-209 with Cys-261. Asp-235 provides a ligand contact to Ca(2+). Catalysis depends on charge relay system residues Asp-255 and His-277. Positions 279, 283, and 287 each coordinate Ca(2+).

This sequence belongs to the AB hydrolase superfamily. Pseudomonas lipase family. Monomer. Requires Ca(2+) as cofactor.

The protein resides in the secreted. It carries out the reaction a triacylglycerol + H2O = a diacylglycerol + a fatty acid + H(+). Its function is as follows. Catalyzes the hydrolysis of triacylglycerol. Also able to catalyze, in anhydrous organic solvents, intramolecular transesterification of omega-hydroxyfatty acid esters to form macrocyclic lactones. This biosynthesis is dependent on the chain length of the substrates, and the formation of monomer lactone is maximum with methyl 18-hydroxyoctadecanoate. With shorter substrates, monomer lactone decreases and the formation of diolide (dimer lactone) increases. The chain is Triacylglycerol lipase from Pseudomonas sp. (strain 109).